The primary structure comprises 284 residues: MEMO1 family protein STK_20620 (284 aa).

It belongs to the MEMO1 family.

This chain is MEMO1 family protein STK_20620, found in Sulfurisphaera tokodaii (strain DSM 16993 / JCM 10545 / NBRC 100140 / 7) (Sulfolobus tokodaii).